An 85-amino-acid polypeptide reads, in one-letter code: Small ribosomal subunit protein bS16c (85 aa).

It belongs to the bacterial ribosomal protein bS16 family.

Its subcellular location is the plastid. The protein resides in the chloroplast. This Agrostis stolonifera (Creeping bentgrass) protein is Small ribosomal subunit protein bS16c.